Here is a 265-residue protein sequence, read N- to C-terminus: Ribosomal RNA small subunit methyltransferase G (265 aa).

Gly75, Leu80, and Arg145 together coordinate S-adenosyl-L-methionine. The disordered stretch occupies residues 212–265 (RAVRSSQRTRAESRGGRGDGERHDGRQVRRTSRDSLRSREVGRDQPTRGQSRST). The span at 220–257 (TRAESRGGRGDGERHDGRQVRRTSRDSLRSREVGRDQP) shows a compositional bias: basic and acidic residues.

This sequence belongs to the methyltransferase superfamily. RNA methyltransferase RsmG family.

It is found in the cytoplasm. In terms of biological role, specifically methylates the N7 position of guanine in position 518 of 16S rRNA. The sequence is that of Ribosomal RNA small subunit methyltransferase G from Frankia casuarinae (strain DSM 45818 / CECT 9043 / HFP020203 / CcI3).